Reading from the N-terminus, the 469-residue chain is Ribulose bisphosphate carboxylase large chain (469 aa).

Lys-5 is modified (N6,N6,N6-trimethyllysine). 2 residues coordinate substrate: Asn-114 and Thr-164. The active-site Proton acceptor is the Lys-166. Lys-168 serves as a coordination point for substrate. The Mg(2+) site is built by Lys-192, Asp-194, and Glu-195. Lys-192 is modified (N6-carboxylysine). His-285 (proton acceptor) is an active-site residue. Residues Arg-286, His-318, and Ser-370 each coordinate substrate.

It belongs to the RuBisCO large chain family. Type I subfamily. In terms of assembly, heterohexadecamer of 8 large chains and 8 small chains; disulfide-linked. The disulfide link is formed within the large subunit homodimers. The cofactor is Mg(2+). The disulfide bond which can form in the large chain dimeric partners within the hexadecamer appears to be associated with oxidative stress and protein turnover.

It is found in the plastid. It localises to the chloroplast. It carries out the reaction 2 (2R)-3-phosphoglycerate + 2 H(+) = D-ribulose 1,5-bisphosphate + CO2 + H2O. The enzyme catalyses D-ribulose 1,5-bisphosphate + O2 = 2-phosphoglycolate + (2R)-3-phosphoglycerate + 2 H(+). Its function is as follows. RuBisCO catalyzes two reactions: the carboxylation of D-ribulose 1,5-bisphosphate, the primary event in carbon dioxide fixation, as well as the oxidative fragmentation of the pentose substrate in the photorespiration process. Both reactions occur simultaneously and in competition at the same active site. In Antirhea lucida (Palo iloron), this protein is Ribulose bisphosphate carboxylase large chain.